Consider the following 316-residue polypeptide: ATP synthase gamma chain (316 aa).

The protein belongs to the ATPase gamma chain family. In terms of assembly, F-type ATPases have 2 components, CF(1) - the catalytic core - and CF(0) - the membrane proton channel. CF(1) has five subunits: alpha(3), beta(3), gamma(1), delta(1), epsilon(1). CF(0) has three main subunits: a, b and c.

It is found in the cellular thylakoid membrane. In terms of biological role, produces ATP from ADP in the presence of a proton gradient across the membrane. The gamma chain is believed to be important in regulating ATPase activity and the flow of protons through the CF(0) complex. The polypeptide is ATP synthase gamma chain (Synechococcus sp. (strain CC9605)).